Consider the following 523-residue polypeptide: Glucose-1-phosphate adenylyltransferase large subunit 1, chloroplastic/amyloplastic (523 aa).

Residues 1–49 (MSSMQFSSVLPLEGKACVSPVRREGSACERLKIGDSSSIRHERASRRMC) constitute a chloroplast transit peptide.

This sequence belongs to the bacterial/plant glucose-1-phosphate adenylyltransferase family. As to quaternary structure, heterotetramer. Starchy endosperm and roots.

It is found in the plastid. Its subcellular location is the chloroplast. It localises to the amyloplast. It catalyses the reaction alpha-D-glucose 1-phosphate + ATP + H(+) = ADP-alpha-D-glucose + diphosphate. Its pathway is glycan biosynthesis; starch biosynthesis. Its activity is regulated as follows. Highly active without 3'phosphoglycerate, and is only slightly affected by the activator 3'phosphoglycerate and inhibitor orthophosphate. Its function is as follows. This protein plays a role in synthesis of starch. It catalyzes the synthesis of the activated glycosyl donor, ADP-glucose from Glc-1-P and ATP. This chain is Glucose-1-phosphate adenylyltransferase large subunit 1, chloroplastic/amyloplastic, found in Hordeum vulgare (Barley).